Here is a 467-residue protein sequence, read N- to C-terminus: Pentatricopeptide repeat-containing protein At1g77170, mitochondrial (467 aa).

Residues 1–30 (MFFSGLISKLHVHGTKRTNHFTIFHRLNHF) constitute a mitochondrion transit peptide. 9 PPR repeats span residues 81 to 115 (IAFL…TVLP), 116 to 150 (DRYS…GFVG), 151 to 181 (DEFC…NPER), 182 to 216 (KLGS…GLEP), 217 to 251 (DDFT…KTEE), 254 to 284 (DIMM…MRQR), 285 to 319 (NVVS…GVRP), 320 to 350 (NKIT…MKSE), and 356 to 386 (GLSH…MPMK). The interval 391 to 466 (VWGCLMGGCE…IPAYSYASTT (76 aa)) is type E motif.

It belongs to the PPR family. PCMP-E subfamily.

The protein resides in the mitochondrion. The sequence is that of Pentatricopeptide repeat-containing protein At1g77170, mitochondrial (PCMP-E21) from Arabidopsis thaliana (Mouse-ear cress).